Consider the following 123-residue polypeptide: Large ribosomal subunit protein uL29 (123 aa).

An N6-acetyllysine modification is found at Lys-19. Residue Lys-25 forms a Glycyl lysine isopeptide (Lys-Gly) (interchain with G-Cter in SUMO2) linkage. Position 29 is a phosphoserine (Ser-29). At Lys-43 the chain carries N6-acetyllysine. The tract at residues 100–123 is disordered; it reads EKLKTKKQQRKERLYPLRKYAVKA.

It belongs to the universal ribosomal protein uL29 family. As to quaternary structure, component of the large ribosomal subunit.

It is found in the cytoplasm. Component of the large ribosomal subunit. The ribosome is a large ribonucleoprotein complex responsible for the synthesis of proteins in the cell. This Mus musculus (Mouse) protein is Large ribosomal subunit protein uL29 (Rpl35).